Reading from the N-terminus, the 178-residue chain is Sec-independent protein translocase protein TatB (178 aa).

Residues 2–22 (LPEIGAAELLIIAAVALIVVG) traverse the membrane as a helical segment. The disordered stretch occupies residues 104-178 (HSPTGYENTV…KARKTAGSAE (75 aa)). Residues 114 to 131 (EPPPPEPEPQPAAEPAPK) show a composition bias toward pro residues. The segment covering 141–154 (PKAAAAPKAAAKPK) has biased composition (low complexity).

Belongs to the TatB family. The Tat system comprises two distinct complexes: a TatABC complex, containing multiple copies of TatA, TatB and TatC subunits, and a separate TatA complex, containing only TatA subunits. Substrates initially bind to the TatABC complex, which probably triggers association of the separate TatA complex to form the active translocon.

The protein resides in the cell inner membrane. Functionally, part of the twin-arginine translocation (Tat) system that transports large folded proteins containing a characteristic twin-arginine motif in their signal peptide across membranes. Together with TatC, TatB is part of a receptor directly interacting with Tat signal peptides. TatB may form an oligomeric binding site that transiently accommodates folded Tat precursor proteins before their translocation. The sequence is that of Sec-independent protein translocase protein TatB from Phenylobacterium zucineum (strain HLK1).